Here is a 1019-residue protein sequence, read N- to C-terminus: Exportin-T (1019 aa).

This sequence belongs to the exportin family.

It is found in the nucleus. Its subcellular location is the cytoplasm. Functionally, tRNA nucleus export receptor which facilitates tRNA translocation across the nuclear pore complex. Involved in pre-tRNA splicing, probably by affecting the interaction of pre-tRNA with splicing endonuclease. This is Exportin-T (LOS1) from Chaetomium globosum (strain ATCC 6205 / CBS 148.51 / DSM 1962 / NBRC 6347 / NRRL 1970) (Soil fungus).